Consider the following 156-residue polypeptide: Glycine cleavage system H protein 2, mitochondrial (156 aa).

Residues 1–23 constitute a mitochondrion transit peptide; sequence MACRLFWASRVASHLRISVAQRG. One can recognise a Lipoyl-binding domain in the interval 47-129; that stretch reads KATFGITDHA…YEQGWIIKVE (83 aa). At Lys88 the chain carries N6-lipoyllysine. Ser131 carries the phosphoserine modification.

The protein belongs to the GcvH family. In terms of assembly, the glycine cleavage system is composed of four proteins: P, T, L and H. (R)-lipoate serves as cofactor.

It localises to the mitochondrion. The glycine decarboxylase (GDC) or glycine cleavage system catalyzes the degradation of glycine. The H protein shuttles the methylamine group of glycine from the P protein to the T protein. This is Glycine cleavage system H protein 2, mitochondrial (GDH2) from Arabidopsis thaliana (Mouse-ear cress).